Consider the following 116-residue polypeptide: MADRAHRLKKRAEFLKVASRGRKVPSPGLVLQALGRDDSDPARIGFTVTKKVGNAVVRNRTRRRLREAVRVVEREEPLNGVDLVLIGRDGTRGRTFAALVGDLRRTLRKAGVRGAE.

It belongs to the RnpA family. In terms of assembly, consists of a catalytic RNA component (M1 or rnpB) and a protein subunit.

The catalysed reaction is Endonucleolytic cleavage of RNA, removing 5'-extranucleotides from tRNA precursor.. RNaseP catalyzes the removal of the 5'-leader sequence from pre-tRNA to produce the mature 5'-terminus. It can also cleave other RNA substrates such as 4.5S RNA. The protein component plays an auxiliary but essential role in vivo by binding to the 5'-leader sequence and broadening the substrate specificity of the ribozyme. This is Ribonuclease P protein component from Gluconacetobacter diazotrophicus (strain ATCC 49037 / DSM 5601 / CCUG 37298 / CIP 103539 / LMG 7603 / PAl5).